The chain runs to 135 residues: UPF0355 protein MRSA252 (135 aa).

This sequence belongs to the UPF0355 family.

This is UPF0355 protein MRSA252 from Staphylococcus aureus (strain MRSA252).